We begin with the raw amino-acid sequence, 208 residues long: Protein IncB (208 aa).

In terms of biological role, this protein is thought to be cis acting and to contain the putative attachment site on the DNA for the cellular partition apparatus. The chain is Protein IncB (incB) from Escherichia coli.